Here is a 171-residue protein sequence, read N- to C-terminus: 3-hydroxydecanoyl-[acyl-carrier-protein] dehydratase (171 aa).

The active site involves histidine 70.

The protein belongs to the thioester dehydratase family. FabA subfamily. As to quaternary structure, homodimer.

It is found in the cytoplasm. The enzyme catalyses a (3R)-hydroxyacyl-[ACP] = a (2E)-enoyl-[ACP] + H2O. The catalysed reaction is (3R)-hydroxydecanoyl-[ACP] = (2E)-decenoyl-[ACP] + H2O. It catalyses the reaction (2E)-decenoyl-[ACP] = (3Z)-decenoyl-[ACP]. Its pathway is lipid metabolism; fatty acid biosynthesis. Its function is as follows. Necessary for the introduction of cis unsaturation into fatty acids. Catalyzes the dehydration of (3R)-3-hydroxydecanoyl-ACP to E-(2)-decenoyl-ACP and then its isomerization to Z-(3)-decenoyl-ACP. Can catalyze the dehydratase reaction for beta-hydroxyacyl-ACPs with saturated chain lengths up to 16:0, being most active on intermediate chain length. The sequence is that of 3-hydroxydecanoyl-[acyl-carrier-protein] dehydratase from Pseudomonas fluorescens (strain ATCC BAA-477 / NRRL B-23932 / Pf-5).